Reading from the N-terminus, the 292-residue chain is Zinc finger protein OZF (292 aa).

C2H2-type zinc fingers lie at residues 16-38 (FACKVCGKIFSHKSTLTEHEHFH), 44-66 (FECNECGKAFSQKQYVIKHQNTH), 72-94 (LECNECGKSFSQKENLLTHQKIH), 100-122 (FECKDCGKAFIQKSNLIRHQRTH), 128-150 (FICKECGKTFSGKSNLTEHEKIH), 156-178 (FKCNECGTAFGQKKYLIKHQNIH), 184-206 (YECNECGKAFSQRTSLIVHVRIH), 212-234 (YECNVCGKAFSQSSSLTVHVRSH), 240-262 (YGCNECGKAFSQFSTLALHLRIH), and 268-290 (YQCSECGKAFSQKSHHIRHQKIH). Residues Lys-28, Lys-51, and Lys-56 each participate in a glycyl lysine isopeptide (Lys-Gly) (interchain with G-Cter in SUMO2) cross-link. Glycyl lysine isopeptide (Lys-Gly) (interchain with G-Cter in SUMO) cross-links involve residues Lys-157 and Lys-169. A Glycyl lysine isopeptide (Lys-Gly) (interchain with G-Cter in SUMO2) cross-link involves residue Lys-173. The tract at residues 212–292 (YECNVCGKAF…HIRHQKIHTH (81 aa)) is interaction with TERF2IP.

This sequence belongs to the krueppel C2H2-type zinc-finger protein family. Binds DNA. Interacts with SUMO conjugating enzyme UBC9/UBE2I. Interacts with the telomeric protein TERF2IP.

Its subcellular location is the nucleus. The polypeptide is Zinc finger protein OZF (ZNF146) (Bos taurus (Bovine)).